A 290-amino-acid chain; its full sequence is Ras-like protein 1 (290 aa).

11 to 18 (GGGGVGKS) is a GTP binding site. The Effector region signature appears at 33-41 (YDPTIEDSY). Residues 58–62 (DTAGQ) and 117–120 (NKCD) each bind GTP. Residues 176–290 (EKQQQQQQQQ…KSKNGCCVIV (115 aa)) are disordered. 2 stretches are compositionally biased toward low complexity: residues 178 to 216 (QQQQQQQQQNANQQGQDQYGQQKDNQQSQFNNQINNNNN) and 246 to 283 (PNQSQSQSQRQQQQQQQEPQQQSENQFSGQKQSSSKSK). Cys286 is lipidated: S-palmitoyl cysteine. A Cysteine methyl ester modification is found at Cys287. Cys287 carries S-farnesyl cysteine lipidation. Residues 288-290 (VIV) constitute a propeptide, removed in mature form.

This sequence belongs to the small GTPase superfamily. Ras family.

The protein localises to the cell membrane. With respect to regulation, alternates between an inactive form bound to GDP and an active form bound to GTP. Activated by a guanine nucleotide-exchange factor (GEF) and inactivated by a GTPase-activating protein (GAP). In terms of biological role, required for the regulation of both a MAP kinase signaling pathway and a cAMP signaling pathway. The activation of these pathways contributes to the pathogenicity of the cells through the induction of the morphological transition from the yeast to the polarized filamentous form. In Candida albicans (strain SC5314 / ATCC MYA-2876) (Yeast), this protein is Ras-like protein 1 (RAS1).